The sequence spans 285 residues: UPF0173 metal-dependent hydrolase Pnuc_1524 (285 aa).

Belongs to the UPF0173 family.

The protein is UPF0173 metal-dependent hydrolase Pnuc_1524 of Polynucleobacter asymbioticus (strain DSM 18221 / CIP 109841 / QLW-P1DMWA-1) (Polynucleobacter necessarius subsp. asymbioticus).